Here is a 569-residue protein sequence, read N- to C-terminus: Potassium-transporting ATPase potassium-binding subunit (569 aa).

10 helical membrane passes run 3–23 (LMEYTQLALFLGLLALMSPVL), 68–88 (AASLCAFSAAGFLMTFGVLML), 136–156 (VGLAYHNFVSAAAGLAVAVAV), 179–199 (VLYVLLPISLVLAVVLVGQGV), 259–279 (LQMLAIFIIPSSLVFTLGGAV), 284–304 (HAWTVWFVMACLFMVGACSLY), 384–404 (GLYGMVLFILLTVFLAGLMVG), 422–442 (AMLALIIAATPPLLFSAVAAV), 490–510 (IALAMLIGRFGIMLPMLGVAG), and 534–554 (LLLTLVIVIVGALTYLPALAL).

It belongs to the KdpA family. As to quaternary structure, the system is composed of three essential subunits: KdpA, KdpB and KdpC.

It localises to the cell inner membrane. In terms of biological role, part of the high-affinity ATP-driven potassium transport (or Kdp) system, which catalyzes the hydrolysis of ATP coupled with the electrogenic transport of potassium into the cytoplasm. This subunit binds the periplasmic potassium ions and delivers the ions to the membrane domain of KdpB through an intramembrane tunnel. In Nitratidesulfovibrio vulgaris (strain ATCC 29579 / DSM 644 / CCUG 34227 / NCIMB 8303 / VKM B-1760 / Hildenborough) (Desulfovibrio vulgaris), this protein is Potassium-transporting ATPase potassium-binding subunit.